The primary structure comprises 158 residues: MKAVVTRVRSASVVVDDSVVGSIPDSDVGGLLVLIGVATGDTSATARAMAEKLARLRIFEGSTADGRPTEVSALDVDAPMLVVSQFTLMGDTSHGRRPSWSAAAKPAEAEPIFNACVEELRDRGLSVDTGVFGAYMAVESVNDGPFTVLVDIPSGDRS.

Residues 144–145 (GP) carry the Gly-cisPro motif, important for rejection of L-amino acids motif.

The protein belongs to the DTD family. In terms of assembly, homodimer.

It localises to the cytoplasm. It carries out the reaction glycyl-tRNA(Ala) + H2O = tRNA(Ala) + glycine + H(+). The enzyme catalyses a D-aminoacyl-tRNA + H2O = a tRNA + a D-alpha-amino acid + H(+). An aminoacyl-tRNA editing enzyme that deacylates mischarged D-aminoacyl-tRNAs. Also deacylates mischarged glycyl-tRNA(Ala), protecting cells against glycine mischarging by AlaRS. Acts via tRNA-based rather than protein-based catalysis; rejects L-amino acids rather than detecting D-amino acids in the active site. By recycling D-aminoacyl-tRNA to D-amino acids and free tRNA molecules, this enzyme counteracts the toxicity associated with the formation of D-aminoacyl-tRNA entities in vivo and helps enforce protein L-homochirality. This is D-aminoacyl-tRNA deacylase from Corynebacterium kroppenstedtii (strain DSM 44385 / JCM 11950 / CIP 105744 / CCUG 35717).